Consider the following 435-residue polypeptide: Histidinol dehydrogenase (435 aa).

The NAD(+) site is built by Y131, Q189, and N212. Positions 238, 260, and 263 each coordinate substrate. Zn(2+)-binding residues include Q260 and H263. Residues E327 and H328 each act as proton acceptor in the active site. Positions 328, 361, 415, and 420 each coordinate substrate. D361 provides a ligand contact to Zn(2+). H420 contributes to the Zn(2+) binding site.

It belongs to the histidinol dehydrogenase family. Homodimer. Zn(2+) serves as cofactor.

It catalyses the reaction L-histidinol + 2 NAD(+) + H2O = L-histidine + 2 NADH + 3 H(+). The protein operates within amino-acid biosynthesis; L-histidine biosynthesis; L-histidine from 5-phospho-alpha-D-ribose 1-diphosphate: step 9/9. Catalyzes the sequential NAD-dependent oxidations of L-histidinol to L-histidinaldehyde and then to L-histidine. In Buchnera aphidicola subsp. Schizaphis graminum (strain Sg), this protein is Histidinol dehydrogenase (hisD).